Consider the following 326-residue polypeptide: Pyruvate dehydrogenase E1 component subunit alpha (326 aa).

Heterodimer of an alpha and a beta chain. Requires thiamine diphosphate as cofactor.

The catalysed reaction is N(6)-[(R)-lipoyl]-L-lysyl-[protein] + pyruvate + H(+) = N(6)-[(R)-S(8)-acetyldihydrolipoyl]-L-lysyl-[protein] + CO2. Functionally, the pyruvate dehydrogenase complex catalyzes the overall conversion of pyruvate to acetyl-CoA and CO(2). It contains multiple copies of three enzymatic components: pyruvate dehydrogenase (E1), dihydrolipoamide acetyltransferase (E2) and lipoamide dehydrogenase (E3). This Rickettsia prowazekii (strain Madrid E) protein is Pyruvate dehydrogenase E1 component subunit alpha (pdhA).